The chain runs to 393 residues: Glycocyamine kinase (393 aa).

The region spanning 7–94 (REKFAKENFP…FDRVIEEIHH (88 aa)) is the Phosphagen kinase N-terminal domain. The 243-residue stretch at 120–362 (YVKSCRIRCG…NVLIEADKRL (243 aa)) folds into the Phosphagen kinase C-terminal domain. ATP-binding positions include 123 to 127 (SCRIR), histidine 186, arginine 231, 287 to 291 (RASVH), 315 to 320 (RGTGGE), and aspartate 330. Residues 367-393 (PIDDLTPRLNSSTGTSISATASRHMTL) are disordered. Low complexity predominate over residues 377-393 (SSTGTSISATASRHMTL).

Belongs to the ATP:guanido phosphotransferase family. Monomer.

It catalyses the reaction guanidinoacetate + ATP = phosphoguanidinoacetate + ADP + H(+). The polypeptide is Glycocyamine kinase (Hediste diversicolor (Sandworm)).